We begin with the raw amino-acid sequence, 351 residues long: N-acetyl-gamma-glutamyl-phosphate reductase (351 aa).

Cysteine 154 is an active-site residue.

The protein belongs to the NAGSA dehydrogenase family. Type 1 subfamily.

It is found in the cytoplasm. The catalysed reaction is N-acetyl-L-glutamate 5-semialdehyde + phosphate + NADP(+) = N-acetyl-L-glutamyl 5-phosphate + NADPH + H(+). It participates in amino-acid biosynthesis; L-arginine biosynthesis; N(2)-acetyl-L-ornithine from L-glutamate: step 3/4. In terms of biological role, catalyzes the NADPH-dependent reduction of N-acetyl-5-glutamyl phosphate to yield N-acetyl-L-glutamate 5-semialdehyde. This Prochlorococcus marinus subsp. pastoris (strain CCMP1986 / NIES-2087 / MED4) protein is N-acetyl-gamma-glutamyl-phosphate reductase.